A 231-amino-acid polypeptide reads, in one-letter code: UPF0653 protein C607.02c (231 aa).

Disordered stretches follow at residues 1–33 (MPTK…VDDN), 47–68 (YHES…KKDY), 93–132 (SFKS…ENFE), and 147–178 (IESR…APPE). A compositionally biased stretch (basic and acidic residues) spans 9-27 (SVLEAERKKIGLDHAPKED). Basic residues-rich tracts occupy residues 53–67 (KEIK…KKKD) and 109–119 (EKKKIAKRKEK).

The protein belongs to the UPF0653 family.

It localises to the nucleus. The protein resides in the nucleolus. This is UPF0653 protein C607.02c from Schizosaccharomyces pombe (strain 972 / ATCC 24843) (Fission yeast).